The sequence spans 240 residues: Splicing factor rtf2 (240 aa).

Disordered regions lie at residues 1-22 (MGNDGGSLPTRNELVKEPGKVP) and 181-240 (SLNK…RVKI). Residues 185 to 210 (ASKKSNKNGDKKRKHVSKSNSKHAKH) are compositionally biased toward basic residues. 2 stretches are compositionally biased toward basic and acidic residues: residues 211–224 (ELRTNRMLDGENVK) and 231–240 (DMERVKRVKI).

The protein belongs to the rtf2 family. In terms of assembly, interacts with pcn1.

It is found in the nucleus. Putative splicing factor that is required for the correct splicing of a subset of pre-mRNAs. Required for the correct splicing of rtf1, a replication termination factor that mediates site-specific replication termination at replication barrier RTS1. The chain is Splicing factor rtf2 from Schizosaccharomyces pombe (strain 972 / ATCC 24843) (Fission yeast).